The chain runs to 193 residues: MRVFGVDPGLTRCGFGVVDVAANRSASLVAVGVIGSSSELPLSQRLLVISESIDQWLDTHSPDVLAVERVFSQTNLSTVMGVAQASGIVIAAAAKRGIAVALHTPSEVKAAVTGNGRADKIAVTAMVTRILKLKVAPTPADAADALALAITHAWRSGPGSTAAAGELTPARKLWLEAEAKARKNVEKSSKQRR.

Residues Asp7, Glu68, and Asp141 contribute to the active site. Mg(2+) is bound by residues Asp7, Glu68, and Asp141.

Belongs to the RuvC family. As to quaternary structure, homodimer which binds Holliday junction (HJ) DNA. The HJ becomes 2-fold symmetrical on binding to RuvC with unstacked arms; it has a different conformation from HJ DNA in complex with RuvA. In the full resolvosome a probable DNA-RuvA(4)-RuvB(12)-RuvC(2) complex forms which resolves the HJ. It depends on Mg(2+) as a cofactor.

The protein localises to the cytoplasm. It carries out the reaction Endonucleolytic cleavage at a junction such as a reciprocal single-stranded crossover between two homologous DNA duplexes (Holliday junction).. Its function is as follows. The RuvA-RuvB-RuvC complex processes Holliday junction (HJ) DNA during genetic recombination and DNA repair. Endonuclease that resolves HJ intermediates. Cleaves cruciform DNA by making single-stranded nicks across the HJ at symmetrical positions within the homologous arms, yielding a 5'-phosphate and a 3'-hydroxyl group; requires a central core of homology in the junction. The consensus cleavage sequence is 5'-(A/T)TT(C/G)-3'. Cleavage occurs on the 3'-side of the TT dinucleotide at the point of strand exchange. HJ branch migration catalyzed by RuvA-RuvB allows RuvC to scan DNA until it finds its consensus sequence, where it cleaves and resolves the cruciform DNA. This is Crossover junction endodeoxyribonuclease RuvC from Renibacterium salmoninarum (strain ATCC 33209 / DSM 20767 / JCM 11484 / NBRC 15589 / NCIMB 2235).